We begin with the raw amino-acid sequence, 557 residues long: T-complex protein 1 subunit eta (557 aa).

A2 is modified (N-acetylalanine). Positions 529–557 (PKSESAQGDAAGAMGRGRGGGRGRGMRRR) are disordered. Over residues 547-557 (GGGRGRGMRRR) the composition is skewed to basic residues.

This sequence belongs to the TCP-1 chaperonin family. Heterooligomeric complex of about 850 to 900 kDa that forms two stacked rings, 12 to 16 nm in diameter. Interacts with KNAT1.

The protein localises to the cytoplasm. Its function is as follows. Molecular chaperone; assists the folding of proteins upon ATP hydrolysis. Known to play a role, in vitro, in the folding of actin and tubulin. The polypeptide is T-complex protein 1 subunit eta (Arabidopsis thaliana (Mouse-ear cress)).